Here is a 180-residue protein sequence, read N- to C-terminus: Oligoribonuclease (180 aa).

The 164-residue stretch at 7–170 folds into the Exonuclease domain; the sequence is LIWIDLEMTG…DDIRESIAEL (164 aa). Tyr-128 is an active-site residue.

It belongs to the oligoribonuclease family.

The protein localises to the cytoplasm. Its function is as follows. 3'-to-5' exoribonuclease specific for small oligoribonucleotides. The sequence is that of Oligoribonuclease from Ectopseudomonas mendocina (strain ymp) (Pseudomonas mendocina).